The primary structure comprises 347 residues: Globoside alpha-1,3-N-acetylgalactosaminyltransferase 1 (347 aa).

Topologically, residues 1-6 (MTRPRL) are cytoplasmic. Residues 7-27 (AQGLAFFLLGGTGLWVLWKFI) traverse the membrane as a helical; Signal-anchor for type II membrane protein segment. Residues 28–347 (KDWLLVSYIP…VKKNANWLRT (320 aa)) are Lumenal-facing. N-linked (GlcNAc...) asparagine glycosylation is present at asparagine 108. Residues 116–121 (FAVGKY), 206–208 (DVD), and 228–231 (HPGY) each bind substrate. Aspartate 206 and aspartate 208 together coordinate Mn(2+). Glutamate 298 (nucleophile) is an active-site residue.

Belongs to the glycosyltransferase 6 family. The cofactor is Mn(2+).

It localises to the golgi apparatus membrane. The catalysed reaction is a globoside Gb4Cer (d18:1(4E)) + UDP-N-acetyl-alpha-D-galactosamine = a globoside Forssman (d18:1(4E)) + UDP + H(+). The enzyme catalyses a globoside Gb4Cer + UDP-N-acetyl-alpha-D-galactosamine = a globoside IV3GalNAc-Gb4Cer + UDP + H(+). The protein operates within protein modification; protein glycosylation. Its function is as follows. Catalyzes the formation of Forssman glycolipid via the addition of N-acetylgalactosamine (GalNAc) in alpha-1,3-linkage to GalNAcb-1,3Gala-1,4Galb-1,4GlcCer (Gb4Cer). Forssman glycolipid (also called Forssman antigen; FG) probably serves for adherence of some pathogens. Conversely, it diminishes Shiga toxins susceptibility. The polypeptide is Globoside alpha-1,3-N-acetylgalactosaminyltransferase 1 (Mus musculus (Mouse)).